Reading from the N-terminus, the 578-residue chain is DNA primase (578 aa).

The CHC2-type zinc finger occupies 40-64; sequence CPFHQEKTPSFTVNFEKQFYFCFGC. Positions 257 to 339 constitute a Toprim domain; sequence KQILIVEGYV…GKNVKFIFLP (83 aa). 3 residues coordinate Mg(2+): E263, D307, and D309.

The protein belongs to the DnaG primase family. As to quaternary structure, monomer. Interacts with DnaB. Zn(2+) serves as cofactor. Requires Mg(2+) as cofactor.

The catalysed reaction is ssDNA + n NTP = ssDNA/pppN(pN)n-1 hybrid + (n-1) diphosphate.. RNA polymerase that catalyzes the synthesis of short RNA molecules used as primers for DNA polymerase during DNA replication. This is DNA primase from Buchnera aphidicola subsp. Baizongia pistaciae (strain Bp).